We begin with the raw amino-acid sequence, 154 residues long: MTIWVDADACPNVIKEILYRAAERMQLPLILVANQSLRVPPSRFIRTLRVAAGFDVADNEIVRQCEPGDLVITADIPLASEVLAKGAAALNPRGERYSEATIRERLTMRDFMDTLRASGIQTGGPDALSPRDRQHFAAELDKWWLEAKRKKESM.

Belongs to the UPF0178 family.

The polypeptide is UPF0178 protein YaiI (Escherichia fergusonii (strain ATCC 35469 / DSM 13698 / CCUG 18766 / IAM 14443 / JCM 21226 / LMG 7866 / NBRC 102419 / NCTC 12128 / CDC 0568-73)).